The primary structure comprises 83 residues: Small ribosomal subunit protein uS19m (83 aa).

Belongs to the universal ribosomal protein uS19 family.

It is found in the mitochondrion. The sequence is that of Small ribosomal subunit protein uS19m (RPS19) from Tetraselmis subcordiformis (Marine green alga).